Reading from the N-terminus, the 546-residue chain is FAD-dependent monooxygenase (546 aa).

Positions 1-17 (MYDVIVVGAGWCGLAAA) are cleaved as a signal peptide. FAD is bound at residue Ile-106. N-linked (GlcNAc...) asparagine glycosylation is found at Asn-239 and Asn-343.

The protein belongs to the FAD-binding monooxygenase family. Requires FAD as cofactor.

It functions in the pathway antifungal biosynthesis. FAD-dependent monooxygenase; part of the gene cluster that mediates the biosynthesis of the tetrahydropyranyl antifungal agent lanomycin that acts as an inhibitor of CYP51 and blocks the ergosterol biosynthesis. The biosynthesis probably begins with the formation of an hexaketide, followed by methionine mediated alkylation of C-2 and C-6, and methylation of the reduced C-3 oxygen, pyran forming reductive ring closure, oxygenation of C-4, beta-keto reduction, enoyl reduction and dehydration of the remaining oxygens, and finally, acylation with glycine to complete the biosynthesis. The polypeptide is FAD-dependent monooxygenase (Pyrenophora dematioidea (Helminthosporium dematioideum)).